The sequence spans 318 residues: tRNA pseudouridine synthase B (318 aa).

The Nucleophile role is filled by D54.

Belongs to the pseudouridine synthase TruB family. Type 1 subfamily.

The catalysed reaction is uridine(55) in tRNA = pseudouridine(55) in tRNA. In terms of biological role, responsible for synthesis of pseudouridine from uracil-55 in the psi GC loop of transfer RNAs. The sequence is that of tRNA pseudouridine synthase B from Ralstonia pickettii (strain 12J).